Here is a 315-residue protein sequence, read N- to C-terminus: Prephenate dehydratase (315 aa).

A Prephenate dehydratase domain is found at 3-190; the sequence is RIAYLGPQGT…ARTRFVLVGR (188 aa). Residues 204-281 form the ACT domain; that stretch reads SVALRLPNTP…EDVRYLGSWP (78 aa).

As to quaternary structure, homodimer.

It catalyses the reaction prephenate + H(+) = 3-phenylpyruvate + CO2 + H2O. It functions in the pathway amino-acid biosynthesis; L-phenylalanine biosynthesis; phenylpyruvate from prephenate: step 1/1. In Mycobacterium sp. (strain JLS), this protein is Prephenate dehydratase (pheA).